Reading from the N-terminus, the 446-residue chain is Exodeoxyribonuclease 7 large subunit (446 aa).

The protein belongs to the XseA family. As to quaternary structure, heterooligomer composed of large and small subunits.

Its subcellular location is the cytoplasm. The enzyme catalyses Exonucleolytic cleavage in either 5'- to 3'- or 3'- to 5'-direction to yield nucleoside 5'-phosphates.. Bidirectionally degrades single-stranded DNA into large acid-insoluble oligonucleotides, which are then degraded further into small acid-soluble oligonucleotides. The protein is Exodeoxyribonuclease 7 large subunit of Streptococcus equi subsp. zooepidemicus (strain MGCS10565).